The primary structure comprises 322 residues: Probable cAMP-dependent protein kinase catalytic subunit (322 aa).

In terms of domain architecture, Protein kinase spans Phe-7–Phe-261. Residues Val-13 to Val-21 and Lys-37 contribute to the ATP site. Asp-132 acts as the Proton acceptor in catalysis. One can recognise an AGC-kinase C-terminal domain in the interval Lys-262 to Leu-322.

It belongs to the protein kinase superfamily. AGC Ser/Thr protein kinase family. cAMP subfamily.

It catalyses the reaction L-seryl-[protein] + ATP = O-phospho-L-seryl-[protein] + ADP + H(+). The catalysed reaction is L-threonyl-[protein] + ATP = O-phospho-L-threonyl-[protein] + ADP + H(+). The chain is Probable cAMP-dependent protein kinase catalytic subunit from Encephalitozoon cuniculi (strain GB-M1) (Microsporidian parasite).